The sequence spans 472 residues: Inhibitor of Apoptosis OPG037 (472 aa).

ANK repeat units follow at residues 97 to 126, 130 to 161, 233 to 263, 267 to 297, 322 to 351, and 353 to 377; these read DGNYPLHIASKINNNRIVAMLLTHGADPNA, HNKTPLYYLSGTDDEVIERINLLVQYGAKINN, DGNTPLHIVCSKTVKNVDIIDLLLPSTDVNK, FGDSPLTLLIKTLSPAHLINKLLSTSNVITD, YDSTDFKMAVEVGSIRCVKYLLDNDIICED, and MYYAVLSEYETMVDYLLFNHFSVDF.

It belongs to the orthopoxvirus OPG037 protein family. As to quaternary structure, may interact with host caspase-9-Apaf-1 complex.

The protein resides in the host cytoplasm. In terms of biological role, inhibits host apoptosis. Acts by associating with host apoptosome. The chain is Inhibitor of Apoptosis OPG037 (OPG037) from Vaccinia virus (strain Western Reserve) (VACV).